Consider the following 342-residue polypeptide: Phenylalanine--tRNA ligase alpha subunit (342 aa).

Glu257 is a Mg(2+) binding site.

It belongs to the class-II aminoacyl-tRNA synthetase family. Phe-tRNA synthetase alpha subunit type 1 subfamily. In terms of assembly, tetramer of two alpha and two beta subunits. Mg(2+) is required as a cofactor.

It is found in the cytoplasm. It carries out the reaction tRNA(Phe) + L-phenylalanine + ATP = L-phenylalanyl-tRNA(Phe) + AMP + diphosphate + H(+). This is Phenylalanine--tRNA ligase alpha subunit from Legionella pneumophila subsp. pneumophila (strain Philadelphia 1 / ATCC 33152 / DSM 7513).